A 62-amino-acid polypeptide reads, in one-letter code: Disintegrin schistatin-like subunit A (62 aa).

Residues 1–62 (SVNPCCDPVI…TTDCPRNRYN (62 aa)) enclose the Disintegrin domain. 4 disulfides stabilise this stretch: Cys-5/Cys-28, Cys-19/Cys-25, Cys-24/Cys-49, and Cys-37/Cys-56. The short motif at 41–43 (RGD) is the Cell attachment site element.

It belongs to the disintegrin family. Dimeric disintegrin subfamily. As to quaternary structure, heterodimer with subunit B; disulfide-linked. In terms of tissue distribution, expressed by the venom gland.

It is found in the secreted. May bind to both alpha-IIb/beta-3 (ITGA2B/ITGB3) and alpha-V/beta-3 (ITGAV/ITGB3) integrins, and may inhibit platelet aggregation. The polypeptide is Disintegrin schistatin-like subunit A (Echis carinatus (Saw-scaled viper)).